The chain runs to 455 residues: Histone chaperone RTT106 (455 aa).

At Ser2 the chain carries N-acetylserine. The interval 2 to 67 is dimeric region; sequence SKLFLDELPE…SSDLLKTDEI (66 aa). 2 consecutive PH domains span residues 68-200 and 217-301; these read SETN…GFKI and INSF…VKRK. The segment at 68-301 is double PH domain; it reads SETNTIFKLE…AKIDDYVKRK (234 aa). A compositionally biased stretch (basic and acidic residues) spans 305–314; it reads DKSMSEELKA. Positions 305-455 are disordered; that stretch reads DKSMSEELKA…DEDGSGVEYD (151 aa). A compositionally biased stretch (polar residues) spans 319–339; that stretch reads KGQATDGTADQPSILQEATRQ. Acidic residues-rich tracts occupy residues 350 to 366 and 376 to 395; these read SDDD…ESDL and DGAE…DEEE. The segment covering 402-418 has biased composition (polar residues); that stretch reads ALNRDNSFASINGQPEQ. Phosphoserine is present on residues Ser408 and Ser411. Residues 420–429 show a composition bias toward basic and acidic residues; that stretch reads LQYKEFKEPL. A compositionally biased stretch (acidic residues) spans 430 to 455; sequence ELEDIPIEIDNDDDEDDEDGSGVEYD. A Phosphoserine modification is found at Ser450.

It belongs to the RTT106 family. In terms of assembly, homodimers (via the N-terminal domain). Interacts with the SWI/SNF complex. Interacts with the RSC complex. Interacts with the HIR complex. Interacts with the CAF-1 complex. Interacts with RLF2. Interacts with SIR4. Interacts with YTA7. Interacts with CAC2. Interacts with HPC2. Interacts with HIR2. Interacts with MSI1. Interacts with HIR1. Interacts with histone H3. Interacts with histone H4.

Its subcellular location is the nucleus. It localises to the chromosome. Its function is as follows. Histones H3 and H4 chaperone involved in the nucleosome formation and heterochromatin silencing. Required for the deposition of H3K56ac-carrying H3-H4 complex onto newly-replicated DNA. Plays a role in the transcriptional regulation of the cell-cycle dependent histone genes by directly recruiting the SWI/SNF and RSC chromatin remodeling complexes to the histone genes in a cell cycle dependent manner. In cooperation with HIR and ASF1, creates a repressive structure at the core histone gene promoter and contributes to their repression outside of S phase. Involved in regulation of Ty1 transposition. The protein is Histone chaperone RTT106 of Saccharomyces cerevisiae (strain ATCC 204508 / S288c) (Baker's yeast).